The primary structure comprises 393 residues: Glucose-1-phosphate adenylyltransferase (393 aa).

Alpha-D-glucose 1-phosphate is bound by residues Tyr-105, Gly-170, 185–186 (EK), and Ser-196.

Belongs to the bacterial/plant glucose-1-phosphate adenylyltransferase family. Homotetramer.

It catalyses the reaction alpha-D-glucose 1-phosphate + ATP + H(+) = ADP-alpha-D-glucose + diphosphate. The protein operates within glycan biosynthesis; glycogen biosynthesis. Its function is as follows. Involved in the biosynthesis of ADP-glucose, a building block required for the elongation reactions to produce glycogen. Catalyzes the reaction between ATP and alpha-D-glucose 1-phosphate (G1P) to produce pyrophosphate and ADP-Glc. The protein is Glucose-1-phosphate adenylyltransferase of Clostridium perfringens (strain 13 / Type A).